The chain runs to 339 residues: Vomeronasal type-1 receptor A14 (339 aa).

The Extracellular portion of the chain corresponds to 1–42 (MMGVQICQGMMSEIPFFSPPPQFSYMMNKNIRLHTDSNIRNT). The helical transmembrane segment at 43–63 (FFTDIGIGISANSLLLLFNIF) threads the bilayer. Over 64 to 75 (KLTRGQRSRLTD) the chain is Cytoplasmic. A helical transmembrane segment spans residues 76–96 (LPIGLLSLINLLMLLMAAFIA). Residues 97-119 (TDTFISWKGWDDIICKFLVYLYR) lie on the Extracellular side of the membrane. Cysteines 111 and 198 form a disulfide. A helical transmembrane segment spans residues 120–140 (TFRGLSLCTSCLLSVLQAIIL). Residues 141 to 160 (SPRSSCLAKFKHKPPHHISC) lie on the Cytoplasmic side of the membrane. Residues 161–181 (AILSLSVLYMFIGSHLLVSII) form a helical membrane-spanning segment. Topologically, residues 182-213 (ATPNLTTNDFIHVTQSCSILPMSYLMQCMFST) are extracellular. The N-linked (GlcNAc...) asparagine glycan is linked to Asn-185. The chain crosses the membrane as a helical span at residues 214 to 234 (LLAIRDVFLISLMVLSTWYMV). Topologically, residues 235–264 (ALLCRHRKQTRHLQGTSLSPKASPEQRATR) are cytoplasmic. The chain crosses the membrane as a helical span at residues 265–285 (SILMLMSLFVLMSVFDSIVCS). Topologically, residues 286–296 (SRTMYLNDPIS) are extracellular. A helical transmembrane segment spans residues 297–317 (YSIQLFMVHIYATVSPFVFIV). The Cytoplasmic portion of the chain corresponds to 318 to 339 (TEKHIVNFLRSVCEGDECLNIH).

This sequence belongs to the G-protein coupled receptor 1 family.

The protein resides in the cell membrane. Putative pheromone receptor implicated in the regulation of social as well as reproductive behavior. The polypeptide is Vomeronasal type-1 receptor A14 (Rattus norvegicus (Rat)).